The primary structure comprises 710 residues: MAAGRHGGYRDYEARERELDAEASRRSKEQQHHHHPSGRHQRGDSDPRCEADRRRDGGRSRGGRELSNGYGHRRSPPPRSRLSARLGDREPGEVLSGSASDDSGGRPHRARENGVSSSSRDGESVVAASASSPSKKRKFSPIIWDRDSPKPMHSDVAKGKKAVDSVPTELPLPPPPPLPPQDHIPERLAVEKSPMDVEPAVASESPEQLQEHAESRVMEEEEEYSTMRNISTSRWAGANDDEEEGAPHRKKKSASPADSAELGQRKKALSPELGEVVASDISGGRTMSRSSDSGRLGADENEDLEVDKDDYMDVDRDDDGNSDIANHQSGMDSEYEVRRSETPEPVKPPHRCINMLQGCRSVDEFERLNKINEGTYGVVYRARDKKTGEIVALKKVKMEKEREGFPLTSLREINILLSFHHPSIVDVKEVVVGSSLDSIFMVMEYMEHDLKGVMEAMKQPYSQSEVKCLMLQLLEGVKYLHDNWVLHRDLKTSNLLLNNRGELKICDFGLSRQYGSPLKPYTQLVVTLWYRAPELLLGTKEYSTAIDMWSVGCIMAELLAKEPLFNGKTEFEQLDKIFRTLGTPNEKIWPGYAKLPGVKVNFVKQPYNRLRDKFPAASFSGRPILSEAGFDLLNNLLTYDPEKRLSADAALQHEWFREVPLPKSKDFMPTFPALNELDRRTKRYLKSPDPLEEQRLKELQGNIGNRGLFG.

A disordered region spans residues Met-1–His-350. The span at Gly-8–Gln-30 shows a compositional bias: basic and acidic residues. Residues Gln-31–His-40 show a composition bias toward basic residues. Residues Gln-41–Arg-64 are compositionally biased toward basic and acidic residues. Positions Ser-124–Pro-133 are enriched in low complexity. The span at Trp-144 to Val-163 shows a compositional bias: basic and acidic residues. Pro residues predominate over residues Leu-170 to Asp-182. 2 stretches are compositionally biased toward basic and acidic residues: residues His-183–Met-195 and Leu-209–Met-218. Positions Asp-299–Lys-308 are enriched in acidic residues. Residues Tyr-335 to Glu-344 show a composition bias toward basic and acidic residues. In terms of domain architecture, Protein kinase spans Phe-365–Phe-656. Residues Ile-371–Val-379 and Lys-394 each bind ATP. Residue Thr-375 is modified to Phosphothreonine. Position 376 is a phosphotyrosine (Tyr-376). The active-site Proton acceptor is Asp-489. Ser-516 carries the post-translational modification Phosphoserine. Thr-522 bears the Phosphothreonine mark.

The protein belongs to the protein kinase superfamily. CMGC Ser/Thr protein kinase family. CDC2/CDKX subfamily.

It catalyses the reaction L-seryl-[protein] + ATP = O-phospho-L-seryl-[protein] + ADP + H(+). The enzyme catalyses L-threonyl-[protein] + ATP = O-phospho-L-threonyl-[protein] + ADP + H(+). It carries out the reaction [DNA-directed RNA polymerase] + ATP = phospho-[DNA-directed RNA polymerase] + ADP + H(+). This Oryza sativa subsp. indica (Rice) protein is Cyclin-dependent kinase G-2 (CDKG-2).